We begin with the raw amino-acid sequence, 510 residues long: NAD(P)H-quinone oxidoreductase subunit 2 B, chloroplastic (510 aa).

Transmembrane regions (helical) follow at residues Leu-24 to Leu-44, Ile-57 to Phe-77, Ile-99 to Ile-119, Met-124 to Cys-144, Leu-149 to Tyr-169, Tyr-183 to Gly-203, Pro-227 to Ala-247, Trp-295 to Ile-315, Met-323 to Asp-343, Tyr-354 to Leu-374, Ala-395 to Phe-415, Leu-418 to Leu-438, and Leu-482 to Val-502.

This sequence belongs to the complex I subunit 2 family. As to quaternary structure, NDH is composed of at least 16 different subunits, 5 of which are encoded in the nucleus.

It is found in the plastid. The protein localises to the chloroplast thylakoid membrane. The catalysed reaction is a plastoquinone + NADH + (n+1) H(+)(in) = a plastoquinol + NAD(+) + n H(+)(out). It carries out the reaction a plastoquinone + NADPH + (n+1) H(+)(in) = a plastoquinol + NADP(+) + n H(+)(out). In terms of biological role, NDH shuttles electrons from NAD(P)H:plastoquinone, via FMN and iron-sulfur (Fe-S) centers, to quinones in the photosynthetic chain and possibly in a chloroplast respiratory chain. The immediate electron acceptor for the enzyme in this species is believed to be plastoquinone. Couples the redox reaction to proton translocation, and thus conserves the redox energy in a proton gradient. This is NAD(P)H-quinone oxidoreductase subunit 2 B, chloroplastic from Manihot esculenta (Cassava).